Reading from the N-terminus, the 363-residue chain is Aminomethyltransferase (363 aa).

The protein belongs to the GcvT family. As to quaternary structure, the glycine cleavage system is composed of four proteins: P, T, L and H.

The catalysed reaction is N(6)-[(R)-S(8)-aminomethyldihydrolipoyl]-L-lysyl-[protein] + (6S)-5,6,7,8-tetrahydrofolate = N(6)-[(R)-dihydrolipoyl]-L-lysyl-[protein] + (6R)-5,10-methylene-5,6,7,8-tetrahydrofolate + NH4(+). In terms of biological role, the glycine cleavage system catalyzes the degradation of glycine. In Picosynechococcus sp. (strain ATCC 27264 / PCC 7002 / PR-6) (Agmenellum quadruplicatum), this protein is Aminomethyltransferase.